The primary structure comprises 40 residues: Beta-glucosidase 1 (40 aa).

The catalysed reaction is Hydrolysis of terminal, non-reducing beta-D-glucosyl residues with release of beta-D-glucose.. This is Beta-glucosidase 1 from Passalora fulva (Tomato leaf mold).